We begin with the raw amino-acid sequence, 734 residues long: Polyribonucleotide nucleotidyltransferase (734 aa).

Positions 505 and 511 each coordinate Mg(2+). The 60-residue stretch at 572-631 (PKLTTIQIPVDAIGMVIGKGGETIRSITEETGAEINIEDDGTVTIASASGEGASAALETI) folds into the KH domain. Residues 641–715 (GTVYSGKVRD…GKTRFALSIK (75 aa)) enclose the S1 motif domain.

Belongs to the polyribonucleotide nucleotidyltransferase family. Requires Mg(2+) as cofactor.

It localises to the cytoplasm. It carries out the reaction RNA(n+1) + phosphate = RNA(n) + a ribonucleoside 5'-diphosphate. In terms of biological role, involved in mRNA degradation. Catalyzes the phosphorolysis of single-stranded polyribonucleotides processively in the 3'- to 5'-direction. The polypeptide is Polyribonucleotide nucleotidyltransferase (Prosthecochloris aestuarii (strain DSM 271 / SK 413)).